The sequence spans 666 residues: MRGCLQLARWLRAAPKCPAASLLKPPSGLANPARFFTTSTACWASRSRAPASQPSSDLESRIAAIPIDRYRNFCIVAHVDHGKSTLSDRLLELTGTIQPGMNKQVLDKLDVERERGITVKAQTCTMIYNHNGEDYLLHLVDTPGHVDFRAEVSRSYASCGGALLLVDASQGIQAQTVANFYLAFSQGLELIPVINKVDLPSADPERALDQMEQSFELDTESAVLVSAKTGLNVQQLLPTVVEKIPAPVGDVNNPLRMLLVDSWYDSYRGVICLVRVFDGEIRAGDQLVSFATGIKYFVGEVGIMYPNETAQSVLRAGQVGYIFFNPGMKRSKEAKIGDTYTKVGFEKVVEPLPGFEEPKAMVFVAAYPVDADHFEHLEDSINQLCLNDRSITVQKESSHALGAGFRLGFLGTLHCSVFEDRLRQEHGASIIITPPSVPVKLIWKDGKEEIISNPAKFPEDEELRGKISEIQEPYVVATLTLPDEYLGKVIELCESNRGVQKSLEYFTSTQVILKYELPLAQLVDDFFGKLKGSTKGYATLDYEESAWQTSNIVKLQLLVNKAPVDAVARLVHYSQVERLGRQWVTKFKEHVDRQLFEIVIQAAVGRKVVARETVKPYRKDVLAKLHASDVSRRRKLLEKQKEGRKKLRAVGNVVIEQKAFQAFLAK.

Residues 1–43 (MRGCLQLARWLRAAPKCPAASLLKPPSGLANPARFFTTSTACW) constitute a mitochondrion transit peptide. The tr-type G domain maps to 68–248 (DRYRNFCIVA…TVVEKIPAPV (181 aa)). GTP contacts are provided by residues 77–84 (AHVDHGKS), 141–145 (DTPGH), and 195–198 (NKVD).

Belongs to the TRAFAC class translation factor GTPase superfamily. Classic translation factor GTPase family. LepA subfamily.

It is found in the mitochondrion inner membrane. The enzyme catalyses GTP + H2O = GDP + phosphate + H(+). Promotes mitochondrial protein synthesis. May act as a fidelity factor of the translation reaction, by catalyzing a one-codon backward translocation of tRNAs on improperly translocated ribosomes. Binds to mitochondrial ribosomes in a GTP-dependent manner. This chain is Translation factor guf1, mitochondrial (guf1), found in Aspergillus niger (strain ATCC MYA-4892 / CBS 513.88 / FGSC A1513).